We begin with the raw amino-acid sequence, 514 residues long: Ferrochelatase-2, chloroplastic (514 aa).

It belongs to the ferrochelatase family.

The protein resides in the plastid. It is found in the chloroplast. It carries out the reaction heme b + 2 H(+) = protoporphyrin IX + Fe(2+). It functions in the pathway porphyrin-containing compound metabolism; protoheme biosynthesis; protoheme from protoporphyrin-IX: step 1/1. Its function is as follows. Catalyzes the ferrous insertion into protoporphyrin IX. This chain is Ferrochelatase-2, chloroplastic (HEMH), found in Cucumis sativus (Cucumber).